A 124-amino-acid polypeptide reads, in one-letter code: Large ribosomal subunit protein bL12 (124 aa).

This sequence belongs to the bacterial ribosomal protein bL12 family. In terms of assembly, homodimer. Part of the ribosomal stalk of the 50S ribosomal subunit. Forms a multimeric L10(L12)X complex, where L10 forms an elongated spine to which 2 to 4 L12 dimers bind in a sequential fashion. Binds GTP-bound translation factors.

Functionally, forms part of the ribosomal stalk which helps the ribosome interact with GTP-bound translation factors. Is thus essential for accurate translation. The polypeptide is Large ribosomal subunit protein bL12 (Ralstonia pickettii (strain 12J)).